The following is a 310-amino-acid chain: L-lactate dehydrogenase (310 aa).

NAD(+)-binding positions include Met-10 to Val-11, Asp-32, Tyr-62, and Gly-76 to Val-77. Substrate contacts are provided by residues Gln-79, Arg-85, and Asn-117–Asp-120. Residues Ala-115–Asn-117 and Ser-140 each bind NAD(+). Asp-145–Arg-148 is a binding site for substrate. Residues Arg-150 and Gln-162–Tyr-167 each bind beta-D-fructose 1,6-bisphosphate. Catalysis depends on His-172, which acts as the Proton acceptor. Tyr-218 is subject to Phosphotyrosine. Thr-227 is a binding site for substrate.

The protein belongs to the LDH/MDH superfamily. LDH family. Homotetramer.

Its subcellular location is the cytoplasm. The enzyme catalyses (S)-lactate + NAD(+) = pyruvate + NADH + H(+). Its pathway is fermentation; pyruvate fermentation to lactate; (S)-lactate from pyruvate: step 1/1. Its activity is regulated as follows. Allosterically activated by fructose 1,6-bisphosphate (FBP). It binds two fructose 1,6-bisphosphate (FBP) molecules per tetramer. In terms of biological role, catalyzes the conversion of lactate to pyruvate. This Thermus caldophilus protein is L-lactate dehydrogenase.